A 1939-amino-acid chain; its full sequence is Myosin-6 (1939 aa).

Residues 32–81 enclose the Myosin N-terminal SH3-like domain; sequence DIRTECFVPDDKEEFVKAKILSREGGKVIAETENGKTVTVKEDQVLQQNP. Residues 85–780 form the Myosin motor domain; the sequence is DKIEDMAMLT…LLGLLEEMRD (696 aa). K129 is modified (N6,N6,N6-trimethyllysine). 178–185 contributes to the ATP binding site; the sequence is GESGAGKT. Position 379 is a phosphothreonine (T379). S417 bears the Phosphoserine mark. Actin-binding stretches follow at residues 657-679 and 759-773; these read LNKL…IPNE and KFGH…GLLG. The IQ domain maps to 783 to 812; that stretch reads LSRIITRMQAQARGQLMRIEFKKIVERRDA. Positions 842–1939 form a coiled coil; the sequence is LKSAETEKEM…GAKQKMHDEE (1098 aa). A Phosphoserine modification is found at S1139. A Phosphotyrosine modification is found at Y1261. S1271 is modified (phosphoserine). Phosphothreonine occurs at positions 1277 and 1284. S1309 is modified (phosphoserine). Position 1310 is a phosphotyrosine (Y1310). Position 1311 is a phosphothreonine (T1311). The residue at position 1512 (S1512) is a Phosphoserine. T1515 is modified (phosphothreonine). 2 stretches are compositionally biased toward basic and acidic residues: residues 1826–1837 and 1925–1939; these read GELEAEQKRNAE and KSRD…HDEE. Disordered regions lie at residues 1826–1849 and 1909–1939; these read GELE…ERRI and EERA…HDEE.

It belongs to the TRAFAC class myosin-kinesin ATPase superfamily. Myosin family. Muscle myosin is a hexameric protein that consists of 2 heavy chain subunits (MHC), 2 alkali light chain subunits (MLC) and 2 regulatory light chain subunits (MLC-2).

Its subcellular location is the cytoplasm. It localises to the myofibril. In terms of biological role, muscle contraction. The chain is Myosin-6 (MYH6) from Homo sapiens (Human).